Consider the following 255-residue polypeptide: Myogenic factor 5 (255 aa).

The region spanning 83-134 (DRRKAATMRERRRLKKVNQAFDTLKRCTTTNPNQRLPKVEILRNAIRYIESL) is the bHLH domain. The tract at residues 217 to 249 (SEQPGLPLQDPASLSPVASTDSQPATPGASSSR) is disordered. Positions 232–249 (PVASTDSQPATPGASSSR) are enriched in polar residues.

As to quaternary structure, efficient DNA binding requires dimerization with another bHLH protein.

The protein resides in the nucleus. Its function is as follows. Acts as a transcriptional activator that promotes transcription of muscle-specific target genes and plays a role in muscle differentiation. Together with MYOG and MYOD1, co-occupies muscle-specific gene promoter core region during myogenesis. Induces fibroblasts to differentiate into myoblasts. Probable sequence specific DNA-binding protein. The sequence is that of Myogenic factor 5 (MYF5) from Bos taurus (Bovine).